The sequence spans 291 residues: D-alanine--D-alanine ligase (291 aa).

The ATP-grasp domain occupies 99-291 (KRIVKSLGIN…FKKLISIIIT (193 aa)). 125-179 (EWNKFPAVVKPVREGSSVGLKIVESLEELKEYALDLLKKTERVMVEEFVEGRDMT) is an ATP binding site. Residues aspartate 245, glutamate 258, and asparagine 260 each coordinate Mg(2+).

Belongs to the D-alanine--D-alanine ligase family. Mg(2+) serves as cofactor. Requires Mn(2+) as cofactor.

It localises to the cytoplasm. The enzyme catalyses 2 D-alanine + ATP = D-alanyl-D-alanine + ADP + phosphate + H(+). It functions in the pathway cell wall biogenesis; peptidoglycan biosynthesis. Cell wall formation. The sequence is that of D-alanine--D-alanine ligase from Aquifex aeolicus (strain VF5).